The sequence spans 296 residues: MSDSTYKAGFVSIIGRPNVGKSTLLNRILGEKIVAVSDKPQTTRNVIRGILSDETSQIVFVDTPGIHTARTRINRAMVDAAMTVVTGIDLMLLVVDATQKIEETFIKDICSKAGAPIYLVLNKIDQVTPKEKLFTVIEGYTRLYDFPEIIPISAQSGSNIERLVDLVREHLPEGEALFPDDILTDLPEKFIVAELIREKVFRLTNREVPYGTAVVVEAFAERENGLVAINATIMVERDSHKGIIIGKKGVMLKKIGEQARRDIERLLGTKVYLELFVQVQERWTERTAMLRELGYE.

One can recognise an Era-type G domain in the interval 7-173 (KAGFVSIIGR…VDLVREHLPE (167 aa)). A G1 region spans residues 15-22 (GRPNVGKS). 15–22 (GRPNVGKS) lines the GTP pocket. Residues 41-45 (QTTRN) form a G2 region. The interval 62-65 (DTPG) is G3. GTP is bound by residues 62–66 (DTPGI) and 122–125 (NKID). A G4 region spans residues 122–125 (NKID). Positions 152-154 (ISA) are G5. The 78-residue stretch at 204–281 (TNREVPYGTA…YLELFVQVQE (78 aa)) folds into the KH type-2 domain.

It belongs to the TRAFAC class TrmE-Era-EngA-EngB-Septin-like GTPase superfamily. Era GTPase family. In terms of assembly, monomer.

It localises to the cytoplasm. The protein localises to the cell inner membrane. Its function is as follows. An essential GTPase that binds both GDP and GTP, with rapid nucleotide exchange. Plays a role in 16S rRNA processing and 30S ribosomal subunit biogenesis and possibly also in cell cycle regulation and energy metabolism. The chain is GTPase Era from Trichlorobacter lovleyi (strain ATCC BAA-1151 / DSM 17278 / SZ) (Geobacter lovleyi).